The sequence spans 200 residues: Nucleoside triphosphate pyrophosphatase (200 aa).

Catalysis depends on aspartate 79, which acts as the Proton acceptor.

This sequence belongs to the Maf family. The cofactor is a divalent metal cation.

Its subcellular location is the cytoplasm. It carries out the reaction a ribonucleoside 5'-triphosphate + H2O = a ribonucleoside 5'-phosphate + diphosphate + H(+). It catalyses the reaction a 2'-deoxyribonucleoside 5'-triphosphate + H2O = a 2'-deoxyribonucleoside 5'-phosphate + diphosphate + H(+). Its function is as follows. Nucleoside triphosphate pyrophosphatase. May have a dual role in cell division arrest and in preventing the incorporation of modified nucleotides into cellular nucleic acids. The polypeptide is Nucleoside triphosphate pyrophosphatase (Legionella pneumophila (strain Paris)).